The following is a 321-amino-acid chain: 2,3,4,5-tetrahydropyridine-2,6-dicarboxylate N-succinyltransferase (321 aa).

Positions 166 and 183 each coordinate Mg(2+). Residue E199 is the Acyl-anhydride intermediate of the active site. Residues R201, G216, S219, A242, 257-258 (EA), G265, K281, and 294-297 (RRNS) contribute to the succinyl-CoA site.

It belongs to the type 2 tetrahydrodipicolinate N-succinyltransferase family. As to quaternary structure, homotrimer.

The protein localises to the cytoplasm. It catalyses the reaction (S)-2,3,4,5-tetrahydrodipicolinate + succinyl-CoA + H2O = (S)-2-succinylamino-6-oxoheptanedioate + CoA. Its pathway is amino-acid biosynthesis; L-lysine biosynthesis via DAP pathway; LL-2,6-diaminopimelate from (S)-tetrahydrodipicolinate (succinylase route): step 1/3. Its function is as follows. Catalyzes the conversion of the cyclic tetrahydrodipicolinate (THDP) into the acyclic N-succinyl-L-2-amino-6-oxopimelate using succinyl-CoA. The chain is 2,3,4,5-tetrahydropyridine-2,6-dicarboxylate N-succinyltransferase from Rothia mucilaginosa (strain DY-18) (Stomatococcus mucilaginosus).